Consider the following 92-residue polypeptide: MSRSVWKGPFVDSYVLKKAEASRESGRNEVIKIWSRRSTILPQFVGLTFGVYNGRKHIPVNITEDMIGQKFGEYSPTRTYYGHAADKKAKRK.

Belongs to the universal ribosomal protein uS19 family.

In terms of biological role, protein S19 forms a complex with S13 that binds strongly to the 16S ribosomal RNA. In Roseobacter denitrificans (strain ATCC 33942 / OCh 114) (Erythrobacter sp. (strain OCh 114)), this protein is Small ribosomal subunit protein uS19.